The sequence spans 268 residues: Putative sgc region protein SgcQ (268 aa).

It belongs to the BtpA family.

In Escherichia coli (strain K12), this protein is Putative sgc region protein SgcQ (sgcQ).